A 233-amino-acid chain; its full sequence is uncharacterized protein (233 aa).

The segment at F196 to K212 is the nascent chain stimulates ribosomal stalling during translation by interfering with the conformation of the peptidyl transferase center (PTC), and the translating mRNA by adopting a difficult-to-decode structure at the ribosome decoding center.

Functionally, acts as an endogenous target of the ribosome quality control (RQC) pathway. During translation, the nascent chain has a propensity to stall ribosomes, thereby stimulating activation of the RQC pathway. This is an uncharacterized protein from Saccharomyces cerevisiae (strain ATCC 204508 / S288c) (Baker's yeast).